A 547-amino-acid polypeptide reads, in one-letter code: Chaperonin GroEL (547 aa).

ATP contacts are provided by residues 30 to 33 (TLGP), Lys-51, 87 to 91 (DGTTT), Gly-415, 479 to 481 (NAA), and Asp-495.

This sequence belongs to the chaperonin (HSP60) family. Forms a cylinder of 14 subunits composed of two heptameric rings stacked back-to-back. Interacts with the co-chaperonin GroES.

Its subcellular location is the cytoplasm. It carries out the reaction ATP + H2O + a folded polypeptide = ADP + phosphate + an unfolded polypeptide.. Functionally, together with its co-chaperonin GroES, plays an essential role in assisting protein folding. The GroEL-GroES system forms a nano-cage that allows encapsulation of the non-native substrate proteins and provides a physical environment optimized to promote and accelerate protein folding. The sequence is that of Chaperonin GroEL from Pseudomonas aeruginosa (strain UCBPP-PA14).